A 50-amino-acid chain; its full sequence is Sperm protamine P1 (50 aa).

It belongs to the protamine P1 family. In terms of assembly, cross-linked by interchain disulfide bonds around the DNA-helix. In terms of tissue distribution, testis.

The protein resides in the nucleus. It localises to the chromosome. Functionally, protamines substitute for histones in the chromatin of sperm during the haploid phase of spermatogenesis. They compact sperm DNA into a highly condensed, stable and inactive complex. The polypeptide is Sperm protamine P1 (PRM1) (Saimiri sciureus (Common squirrel monkey)).